The following is a 559-amino-acid chain: Chaperonin GroEL 3 (559 aa).

Residues 88-92 (DGTTT), G426, and D507 each bind ATP.

Belongs to the chaperonin (HSP60) family. Forms a cylinder of 14 subunits composed of two heptameric rings stacked back-to-back. Interacts with the co-chaperonin GroES.

Its subcellular location is the cytoplasm. It carries out the reaction ATP + H2O + a folded polypeptide = ADP + phosphate + an unfolded polypeptide.. Together with its co-chaperonin GroES, plays an essential role in assisting protein folding. The GroEL-GroES system forms a nano-cage that allows encapsulation of the non-native substrate proteins and provides a physical environment optimized to promote and accelerate protein folding. The polypeptide is Chaperonin GroEL 3 (Methylococcus capsulatus (strain ATCC 33009 / NCIMB 11132 / Bath)).